Here is a 224-residue protein sequence, read N- to C-terminus: Myogenin (224 aa).

Ser-77 and Ser-79 each carry phosphoserine; by CaMK2G. A bHLH domain is found at 81–132 (DRRRAATLREKRRLKKVNEAFEALKRSTLLNPNQRLPKVEILRSAIQYIERL). Thr-87 is modified (phosphothreonine; by CaMK2G).

As to quaternary structure, homodimer and heterodimer with E12; heterodimerization enhances MYOG DNA-binding and transcriptional activities. Interacts with SMARCA4/BRG1/BAF190A. Interacts (via C-terminal region) with SSRP1 and SUPT16H; the interaction is indicative of an interaction with the FACT complex. nteracts with CSRP3. Phosphorylated by CAMK2G on threonine and serine amino acids in a muscle activity-dependent manner. Phosphorylation of Thr-87 impairs both DNA-binding and trans-activation functions in contracting muscles. In terms of tissue distribution, expressed in myoblast cells. Expressed weakly in myotubes (at protein level). Expressed strongly in denervated muscles and in satellite cells isolated from denervated muscles. Expressed weakly in innervated muscle and in satellite cells isolated from innervated muscles.

It localises to the nucleus. In terms of biological role, acts as a transcriptional activator that promotes transcription of muscle-specific target genes and plays a role in muscle differentiation, cell cycle exit and muscle atrophy. Essential for the development of functional embryonic skeletal fiber muscle differentiation. However is dispensable for postnatal skeletal muscle growth; phosphorylation by CAMK2G inhibits its transcriptional activity in respons to muscle activity. Required for the recruitment of the FACT complex to muscle-specific promoter regions, thus promoting gene expression initiation. During terminal myoblast differentiation, plays a role as a strong activator of transcription at loci with an open chromatin structure previously initiated by MYOD1. Together with MYF5 and MYOD1, co-occupies muscle-specific gene promoter core regions during myogenesis. Also cooperates with myocyte-specific enhancer factor MEF2D and BRG1-dependent recruitment of SWI/SNF chromatin-remodeling enzymes to alter chromatin structure at myogenic late gene promoters. Facilitates cell cycle exit during terminal muscle differentiation through the up-regulation of miR-20a expression, which in turn represses genes involved in cell cycle progression. Binds to the E-box containing (E1) promoter region of the miR-20a gene. Also plays a role in preventing reversal of muscle cell differentiation. Contributes to the atrophy-related gene expression in adult denervated muscles. Induces fibroblasts to differentiate into myoblasts. This chain is Myogenin (Myog), found in Mus musculus (Mouse).